The sequence spans 196 residues: Glycerol-3-phosphate acyltransferase (196 aa).

Transmembrane regions (helical) follow at residues 1–21, 55–75, 81–101, 118–138, and 140–160; these read MIIF…SISG, IAIF…WLGT, PIYL…PIYF, AISI…VYLF, and YASL…WYIQ.

It belongs to the PlsY family. As to quaternary structure, probably interacts with PlsX.

It localises to the cell inner membrane. It catalyses the reaction an acyl phosphate + sn-glycerol 3-phosphate = a 1-acyl-sn-glycero-3-phosphate + phosphate. The protein operates within lipid metabolism; phospholipid metabolism. Catalyzes the transfer of an acyl group from acyl-phosphate (acyl-PO(4)) to glycerol-3-phosphate (G3P) to form lysophosphatidic acid (LPA). This enzyme utilizes acyl-phosphate as fatty acyl donor, but not acyl-CoA or acyl-ACP. The protein is Glycerol-3-phosphate acyltransferase of Blochmanniella floridana.